Here is a 565-residue protein sequence, read N- to C-terminus: Glucose starvation modulator protein 1 (565 aa).

The segment at residues 20-48 (CVFCHQKHLQCSNERPCKNCVKRNIAHGC) is a DNA-binding region (zn(2)-C6 fungal-type). 2 disordered regions span residues 63–106 (GVSG…ESSN) and 250–269 (QVSP…NTLS). Over residues 82–93 (SPLSTSMSPTDS) the composition is skewed to polar residues. Residues 252 to 269 (SPSPSNTSTSENNTNTLS) show a composition bias toward low complexity.

Belongs to the ERT1/acuK family.

The protein localises to the nucleus. Its function is as follows. Transcription factor which regulates nonfermentable carbon utilization. The chain is Glucose starvation modulator protein 1 (GSM1) from Candida dubliniensis (strain CD36 / ATCC MYA-646 / CBS 7987 / NCPF 3949 / NRRL Y-17841) (Yeast).